The primary structure comprises 356 residues: Dihydroorotate dehydrogenase (quinone) (356 aa).

FMN-binding positions include 66-70 and Thr90; that span reads AGFDK. A substrate-binding site is contributed by Lys70. 115-119 is a substrate binding site; the sequence is NRMGF. Residues Asn143 and Asn176 each contribute to the FMN site. Asn176 is a substrate binding site. Ser179 acts as the Nucleophile in catalysis. Substrate is bound at residue Asn181. 2 residues coordinate FMN: Lys212 and Thr240. A substrate-binding site is contributed by 241 to 242; sequence NT. Residues Gly264, Gly293, and 314–315 each bind FMN; that span reads YT.

It belongs to the dihydroorotate dehydrogenase family. Type 2 subfamily. Monomer. FMN serves as cofactor.

The protein resides in the cell membrane. The enzyme catalyses (S)-dihydroorotate + a quinone = orotate + a quinol. It participates in pyrimidine metabolism; UMP biosynthesis via de novo pathway; orotate from (S)-dihydroorotate (quinone route): step 1/1. Catalyzes the conversion of dihydroorotate to orotate with quinone as electron acceptor. The polypeptide is Dihydroorotate dehydrogenase (quinone) (pyrD) (Mycobacterium leprae (strain TN)).